Reading from the N-terminus, the 266-residue chain is 15-hydroxyprostaglandin dehydrogenase [NAD(+)] (266 aa).

NAD(+) is bound by residues 12–20, 36–37, 63–65, and asparagine 91; these read GAAQGIGRA, DW, and CDV. Substrate-binding residues include serine 138 and glutamine 148. Residue tyrosine 151 is the Proton acceptor of the active site. Residues 151-155 and 186-188 contribute to the NAD(+) site; these read YCASK and VNT.

Belongs to the short-chain dehydrogenases/reductases (SDR) family. In terms of assembly, homodimer. Detected in colon epithelium (at protein level).

It localises to the cytoplasm. It catalyses the reaction prostaglandin E2 + NAD(+) = 15-oxoprostaglandin E2 + NADH + H(+). It carries out the reaction (15S)-hydroxy-(5Z,8Z,11Z,13E)-eicosatetraenoate + NAD(+) = 15-oxo-(5Z,8Z,11Z,13E)-eicosatetraenoate + NADH + H(+). The enzyme catalyses (11R)-hydroxy-(5Z,8Z,12E,14Z)-eicosatetraenoate + NAD(+) = 11-oxo-(5Z,8Z,12E,14Z)-eicosatetraenoate + NADH + H(+). The catalysed reaction is lipoxin A4 + NAD(+) = 15-oxo-(5S,6R)-dihydroxy-(7E,9E,11Z,13E)-eicosatetraenoate + NADH + H(+). It catalyses the reaction 15-oxo-(5S,6R)-dihydroxy-(7E,9E,11Z)-eicosatrienoate + NADH + H(+) = (5S,6R,15S)-trihydroxy-(7E,9E,11Z)-eicosatrienoate + NAD(+). It carries out the reaction prostaglandin A1 + NAD(+) = 15-oxo-prostaglandin A1 + NADH + H(+). The enzyme catalyses prostaglandin E1 + NAD(+) = 15-oxoprostaglandin E1 + NADH + H(+). The catalysed reaction is 14-hydroxy-(4Z,7Z,10Z,12E,16Z,19Z)-docosahexaenoate + NAD(+) = 14-oxo-(4Z,7Z,10Z,12E,16Z,19Z)-docosahexaenoate + NADH + H(+). It catalyses the reaction resolvin E1 + NAD(+) = 18-oxo-resolvin E1 + NADH + H(+). It carries out the reaction resolvin D1 + NAD(+) = 8-oxoresolvin D1 + NADH + H(+). The enzyme catalyses resolvin D1 + NAD(+) = 17-oxoresolvin D1 + NADH + H(+). The catalysed reaction is resolvin D2 + NAD(+) = 7-oxoresolvin D2 + NADH + H(+). It catalyses the reaction resolvin D2 + NAD(+) = 16-oxoresolvin D2 + NADH + H(+). Its function is as follows. Catalyzes the NAD-dependent dehydrogenation (oxidation) of a broad array of hydroxylated polyunsaturated fatty acids (mainly eicosanoids and docosanoids, including prostaglandins, lipoxins and resolvins), yielding their corresponding keto (oxo) metabolites. Decreases the levels of the pro-proliferative prostaglandins such as prostaglandin E2 (whose activity is increased in cancer because of an increase in the expression of cyclooxygenase 2) and generates oxo-fatty acid products that can profoundly influence cell function by abrogating pro-inflammatory cytokine expression. Converts resolvins E1, D1 and D2 to their oxo products, which represents a mode of resolvin inactivation. Resolvin E1 plays important roles during the resolution phase of acute inflammation, while resolvins D1 and D2 have a unique role in obesity-induced adipose inflammation. This is 15-hydroxyprostaglandin dehydrogenase [NAD(+)] from Homo sapiens (Human).